We begin with the raw amino-acid sequence, 351 residues long: Cytosolic sulfotransferase 11 (351 aa).

A 3'-phosphoadenylyl sulfate-binding site is contributed by 98–103; it reads KGGTTW. Catalysis depends on histidine 163, which acts as the Proton acceptor. 3'-phosphoadenylyl sulfate-binding positions include arginine 184, serine 192, tyrosine 250, and 316-318; that span reads RKG.

The protein belongs to the sulfotransferase 1 family.

It is found in the cytoplasm. Functionally, sulfotransferase that utilizes 3'-phospho-5'-adenylyl sulfate (PAPS) as sulfonate donor. The polypeptide is Cytosolic sulfotransferase 11 (SOT11) (Arabidopsis thaliana (Mouse-ear cress)).